The following is a 481-amino-acid chain: Ammonium transporter 2 member 3 (481 aa).

Residues 1–36 lie on the Extracellular side of the membrane; that stretch reads MNFNSSKYISHLPESLLPNDASPEWNNKADNAWQLT. Asn-4 carries N-linked (GlcNAc...) asparagine glycosylation. A helical transmembrane segment spans residues 37 to 57; that stretch reads AATLVGLQTVPGLVILYGSMV. Residues 58-62 lie on the Cytoplasmic side of the membrane; that stretch reads KKKWA. A helical transmembrane segment spans residues 63–83; the sequence is VNSAFMALYAFAAVLVCWVLW. Topologically, residues 84–123 are extracellular; it reads AHHMAFGTKLLPFVGKPNFALSQKFLLSKASTNYYLPMAD. Residues 124-144 form a helical membrane-spanning segment; the sequence is FVFYQFAFAAITLVLLGGSLL. Over 145–151 the chain is Cytoplasmic; that stretch reads GRMNFYA. The helical transmembrane segment at 152-172 threads the bilayer; sequence WMLFVPLWLTLSYTVGAFTIW. The Extracellular segment spans residues 173–184; sequence GNGFLEGKIIDY. A helical membrane pass occupies residues 185 to 205; that stretch reads AGGFVIHLSSGVAGFTAAYWV. The Cytoplasmic segment spans residues 206–220; it reads GPRTSNDRQNFPPNN. The chain crosses the membrane as a helical span at residues 221 to 241; it reads IIHMLGGAGFLWMGWTGFNGG. Over 242-248 the chain is Extracellular; that stretch reads APFQVGE. The chain crosses the membrane as a helical span at residues 249–269; the sequence is ITSLAIFNTHLCTATSILVWI. The Cytoplasmic portion of the chain corresponds to 270–281; that stretch reads SLDMAVYKKGSL. The chain crosses the membrane as a helical span at residues 282–302; sequence IGSVQGMMTGLVCITPGAGLV. At 303 to 304 the chain is on the extracellular side; sequence DP. The chain crosses the membrane as a helical span at residues 305–325; the sequence is WAAILMGALSGSIPWYTMMVL. Residues 326 to 338 lie on the Cytoplasmic side of the membrane; that stretch reads HKKSPFFQSVDDT. The chain crosses the membrane as a helical span at residues 339 to 359; it reads LGVFHTHAVAGILGGILSGVF. At 360–363 the chain is on the extracellular side; it reads AKPK. Residues 364-381 traverse the membrane as a helical segment; sequence LLRILYGPYGSGLLYSYF. Over 382 to 395 the chain is Cytoplasmic; that stretch reads DDNIGQGIKQMWYQ. Residues 396-416 form a helical membrane-spanning segment; sequence LLGAVFITIWNVVITSLICIL. Residues 417–481 are Extracellular-facing; sequence LNRFVNLRMQ…HSFPINKIDE (65 aa).

Belongs to the ammonia transporter channel (TC 1.A.11.2) family. Mostly expressed in mycorrhizal roots. Also observed in the cortex and endodermis of non-mycorrhizal roots.

Its subcellular location is the cell membrane. Its function is as follows. Involved in ammonium transport. Required for arbuscular mycorrhizal (AM) symbiosis with AM fungi (e.g. Glomus versiforme and G.intraradices) in low nitrogen conditions. The protein is Ammonium transporter 2 member 3 of Medicago truncatula (Barrel medic).